A 364-amino-acid polypeptide reads, in one-letter code: Aminomethyltransferase (364 aa).

It belongs to the GcvT family. As to quaternary structure, the glycine cleavage system is composed of four proteins: P, T, L and H.

It catalyses the reaction N(6)-[(R)-S(8)-aminomethyldihydrolipoyl]-L-lysyl-[protein] + (6S)-5,6,7,8-tetrahydrofolate = N(6)-[(R)-dihydrolipoyl]-L-lysyl-[protein] + (6R)-5,10-methylene-5,6,7,8-tetrahydrofolate + NH4(+). Its function is as follows. The glycine cleavage system catalyzes the degradation of glycine. This Proteus mirabilis (strain HI4320) protein is Aminomethyltransferase.